We begin with the raw amino-acid sequence, 491 residues long: Nucleoporin NUP42 (491 aa).

The segment at 1–25 adopts a C3H1-type zinc-finger fold; it reads MAICNFFLQGRCRYGEKCWNEHPRG. Disordered stretches follow at residues 23–82 and 92–111; these read PRGG…SQRY and TTWINRDSEKPSAGSFSGFG. Residues 33-64 show a composition bias toward polar residues; the sequence is RYQSQNRYQEQSRYQEQSRYPEQSRYPEQNRY. FG repeat units follow at residues 110–111, 259–260, 302–303, 312–313, 333–334, 342–343, 363–364, 375–376, 379–380, and 410–411; these read FG.

As to quaternary structure, probable component of the nuclear pore complex (NPC).

The protein resides in the nucleus. Its subcellular location is the nuclear pore complex. It localises to the nucleus membrane. Functionally, required for the export of mRNAs containing poly(A) tails from the nucleus into the cytoplasm. The sequence is that of Nucleoporin NUP42 (nup42) from Xenopus laevis (African clawed frog).